The following is a 492-amino-acid chain: Excitatory amino acid transporter (492 aa).

Residues 1–7 (MVSWIRK) are Cytoplasmic-facing. The next 3 membrane-spanning stretches (helical) occupy residues 8–28 (NLLL…GFLL), 47–67 (LLMH…LISG), and 85–105 (TYYM…VLVI). The Extracellular portion of the chain corresponds to 106 to 191 (HPGDPTIKKE…VKASVEYTSG (86 aa)). N-linked (GlcNAc...) asparagine glycosylation is found at asparagine 166 and asparagine 176. 5 helical membrane passes run 192-212 (MNVL…SQLG), 228-248 (VIMK…LCLI), 270-290 (VTVL…IFFV), 358-378 (AVAA…GQVV), and 389-409 (IGAA…LTAV).

The protein belongs to the dicarboxylate/amino acid:cation symporter (DAACS) (TC 2.A.23) family.

It is found in the membrane. Its function is as follows. Transports L-glutamate and also L- and D-aspartate. Essential for terminating the postsynaptic action of glutamate by rapidly removing released glutamate from the synaptic cleft. Acts as a symport by cotransporting sodium. This chain is Excitatory amino acid transporter (GLT-1), found in Onchocerca volvulus.